The sequence spans 303 residues: Dihydroorotate dehydrogenase B (NAD(+)), catalytic subunit (303 aa).

FMN contacts are provided by residues serine 21 and lysine 45–glycine 46. Substrate-binding positions include lysine 45 and asparagine 69–leucine 73. Positions 98 and 126 each coordinate FMN. Asparagine 126 provides a ligand contact to substrate. Cysteine 129 functions as the Nucleophile in the catalytic mechanism. 2 residues coordinate FMN: lysine 165 and valine 191. Residue asparagine 192 to threonine 193 coordinates substrate. FMN contacts are provided by residues glycine 217 and glycine 243–glycine 244.

The protein belongs to the dihydroorotate dehydrogenase family. Type 1 subfamily. In terms of assembly, heterotetramer of 2 PyrK and 2 PyrD type B subunits. The cofactor is FMN.

Its subcellular location is the cytoplasm. It carries out the reaction (S)-dihydroorotate + NAD(+) = orotate + NADH + H(+). It participates in pyrimidine metabolism; UMP biosynthesis via de novo pathway; orotate from (S)-dihydroorotate (NAD(+) route): step 1/1. Catalyzes the conversion of dihydroorotate to orotate with NAD(+) as electron acceptor. In Brachyspira hyodysenteriae (strain ATCC 49526 / WA1), this protein is Dihydroorotate dehydrogenase B (NAD(+)), catalytic subunit (pyrD).